We begin with the raw amino-acid sequence, 149 residues long: MKCPFCGHAATQVIDTRMSEEGDTVRRRRRCESCDRRFTTYERIELFFPAVVKKNGSRVDYDRNKVKDSMRLALRKRPVSAEAIDEAIARIEEKLLSHGEKEIGSDRIGELVMRELKRLDKIGYIRFASVYRSFEDVSEFRDMLDEFRQ.

The segment at 3–34 (CPFCGHAATQVIDTRMSEEGDTVRRRRRCESC) is a zinc-finger region. Residues 49–139 (PAVVKKNGSR…VYRSFEDVSE (91 aa)) enclose the ATP-cone domain.

Belongs to the NrdR family. Requires Zn(2+) as cofactor.

Its function is as follows. Negatively regulates transcription of bacterial ribonucleotide reductase nrd genes and operons by binding to NrdR-boxes. The protein is Transcriptional repressor NrdR of Ralstonia nicotianae (strain ATCC BAA-1114 / GMI1000) (Ralstonia solanacearum).